The following is a 113-amino-acid chain: Putative pterin-4-alpha-carbinolamine dehydratase (113 aa).

This sequence belongs to the pterin-4-alpha-carbinolamine dehydratase family.

The enzyme catalyses (4aS,6R)-4a-hydroxy-L-erythro-5,6,7,8-tetrahydrobiopterin = (6R)-L-erythro-6,7-dihydrobiopterin + H2O. The polypeptide is Putative pterin-4-alpha-carbinolamine dehydratase (Pelodictyon phaeoclathratiforme (strain DSM 5477 / BU-1)).